Here is a 105-residue protein sequence, read N- to C-terminus: METLRYRFDGRNGARTGLDHALVGVVASGNLEVLVERVPLGGAMEIEIVTAARGFGEIWQAVLDDFAARHSLQDVRISINDVGATPAVVSLRLEQAIDVLQGADA.

Ser-28 carries the post-translational modification O-(phosphoribosyl dephospho-coenzyme A)serine.

It belongs to the MdcC family. In terms of processing, covalently binds the prosthetic group of malonate decarboxylase.

The protein localises to the cytoplasm. Functionally, subunit of malonate decarboxylase, it is an acyl carrier protein to which acetyl and malonyl thioester residues are bound via a 2'-(5''-phosphoribosyl)-3'-dephospho-CoA prosthetic group and turn over during the catalytic mechanism. This is Malonate decarboxylase acyl carrier protein from Xanthomonas campestris pv. campestris (strain 8004).